The primary structure comprises 172 residues: Adenine phosphoribosyltransferase (172 aa).

It belongs to the purine/pyrimidine phosphoribosyltransferase family. As to quaternary structure, homodimer.

It localises to the cytoplasm. The catalysed reaction is AMP + diphosphate = 5-phospho-alpha-D-ribose 1-diphosphate + adenine. The protein operates within purine metabolism; AMP biosynthesis via salvage pathway; AMP from adenine: step 1/1. Its function is as follows. Catalyzes a salvage reaction resulting in the formation of AMP, that is energically less costly than de novo synthesis. The protein is Adenine phosphoribosyltransferase of Synechococcus sp. (strain CC9311).